Consider the following 537-residue polypeptide: Cytoplasmic 60S subunit biogenesis factor REI1 homolog (537 aa).

2 C2H2-type zinc fingers span residues 18-42 (YTCN…SDWH) and 83-107 (KTCE…STKH). Disordered stretches follow at residues 101-151 (HLSS…AEEE) and 163-204 (SIHD…PEAL). A compositionally biased stretch (low complexity) spans 192–204 (EETPTTTPKPEAL). The segment at 260 to 284 (NECLTCGKMKVNVFAIQTHMRDKSH) adopts a C2H2-type 3 zinc-finger fold. Residues 312–322 (DWETEEEDKGE) are compositionally biased toward acidic residues. Disordered regions lie at residues 312–361 (DWET…ASSL) and 382–401 (GKHP…ADGI). Positions 323–339 (EDGGVRLGAKRESKVVD) are enriched in basic and acidic residues. Residues 340–356 (ENGDEVMEDEEGWETDS) show a composition bias toward acidic residues. Residues 383 to 395 (KHPHHSRENKKAH) are compositionally biased toward basic residues.

Belongs to the REI1 family. As to quaternary structure, associates with nascent pre-60S particles that have not yet entered the translating pool, and is released from mature 60S subunits.

The protein resides in the cytoplasm. Its function is as follows. Pre-60S-associated factor involved in the cytoplasmic maturation of the 60S subunit. Involved in the dissociation and recycling of other late pre-60S factors before newly synthesized large ribosomal subunits enter translation. The chain is Cytoplasmic 60S subunit biogenesis factor REI1 homolog from Chaetomium thermophilum (strain DSM 1495 / CBS 144.50 / IMI 039719) (Thermochaetoides thermophila).